Reading from the N-terminus, the 178-residue chain is Inorganic pyrophosphatase (178 aa).

Residues Lys-30, Arg-44, and Tyr-56 each contribute to the substrate site. The Mg(2+) site is built by Asp-66, Asp-71, and Asp-103. Tyr-142 is a binding site for substrate.

This sequence belongs to the PPase family. In terms of assembly, homohexamer. It depends on Mg(2+) as a cofactor.

It is found in the cytoplasm. It carries out the reaction diphosphate + H2O = 2 phosphate + H(+). In terms of biological role, catalyzes the hydrolysis of inorganic pyrophosphate (PPi) forming two phosphate ions. This Xanthomonas axonopodis pv. citri (strain 306) protein is Inorganic pyrophosphatase.